A 341-amino-acid chain; its full sequence is Phenylalanine--tRNA ligase alpha subunit (341 aa).

Glu-256 contributes to the Mg(2+) binding site.

This sequence belongs to the class-II aminoacyl-tRNA synthetase family. Phe-tRNA synthetase alpha subunit type 1 subfamily. As to quaternary structure, tetramer of two alpha and two beta subunits. Mg(2+) is required as a cofactor.

It is found in the cytoplasm. The enzyme catalyses tRNA(Phe) + L-phenylalanine + ATP = L-phenylalanyl-tRNA(Phe) + AMP + diphosphate + H(+). In Chlamydia caviae (strain ATCC VR-813 / DSM 19441 / 03DC25 / GPIC) (Chlamydophila caviae), this protein is Phenylalanine--tRNA ligase alpha subunit.